The primary structure comprises 130 residues: Glycine cleavage system H protein (130 aa).

The Lipoyl-binding domain occupies 22–103 (QAWIGISDYA…PYANYIVVVA (82 aa)). Lys63 carries the N6-lipoyllysine modification.

Belongs to the GcvH family. The glycine cleavage system is composed of four proteins: P, T, L and H. The cofactor is (R)-lipoate.

The glycine cleavage system catalyzes the degradation of glycine. The H protein shuttles the methylamine group of glycine from the P protein to the T protein. In Syntrophomonas wolfei subsp. wolfei (strain DSM 2245B / Goettingen), this protein is Glycine cleavage system H protein.